Consider the following 148-residue polypeptide: Flavodoxin (148 aa).

In terms of domain architecture, Flavodoxin-like spans 4 to 145; sequence ALIVYGSTTG…DIVGWAHDVR (142 aa).

The protein belongs to the flavodoxin family. The cofactor is FMN.

Low-potential electron donor to a number of redox enzymes. In Nitratidesulfovibrio vulgaris (strain ATCC 29579 / DSM 644 / CCUG 34227 / NCIMB 8303 / VKM B-1760 / Hildenborough) (Desulfovibrio vulgaris), this protein is Flavodoxin.